The following is a 170-amino-acid chain: MKKISSVIAIALFGTIATANAADLTASTTATATLVEPARITLTYKEGAPITIMDNGNIDTELLVGTLTLGGYKTGTTSTSVNFTDAAGDPMYLTFTSQDGNNHQFTTKVIGKDSRDFDISPKVNGENLVGDDVVLATGSQDFFVRSIGSKGGKLAAGKYTDAVTVTVSNQ.

Residues 1-21 form the signal peptide; sequence MKKISSVIAIALFGTIATANA. Positions 100 to 150 are contains potential antigenic determinants that may stimulate T-cells; sequence GNNHQFTTKVIGKDSRDFDISPKVNGENLVGDDVVLATGSQDFFVRSIGSK.

The protein localises to the secreted. It localises to the capsule. The protein is F1 capsule antigen (caf1) of Yersinia pestis.